The following is a 589-amino-acid chain: Transcription factor 4 (589 aa).

6 disordered regions span residues 1 to 124, 138 to 163, 184 to 239, 254 to 297, 384 to 492, and 556 to 589; these read MTSR…SSSK, DGHH…MLGN, PSHS…SQTG, HTNN…EGPL, SLLP…MANN, and KRRE…MGQM. Residues serine 8 and serine 13 each carry the phosphoserine modification. The span at 56–74 shows a compositional bias: polar residues; it reads GTLSPTKPGSQYYPYSSNN. A leucine-zipper region spans residues 136–157; sequence MQDGHHSSDPWSSSSGMNQPGY. A compositionally biased stretch (polar residues) spans 184 to 224; that stretch reads PSHSSADINSSLPPMSTFHRSGTNHYSTSSCTPPANGTDSI. Positions 255-266 are enriched in low complexity; that stretch reads TNNSFSSNPSTP. The segment covering 283–292 has biased composition (polar residues); sequence NGGQASSSPN. At serine 290 the chain carries Phosphoserine. The class A specific domain stretch occupies residues 380–403; sequence RGSHSLLPNQVPVPQLPVQSATSP. Low complexity-rich tracts occupy residues 385-398 and 421-430; these read LLPN…LPVQ and GQSVSSGSSE. The residue at position 433 (serine 433) is a Phosphoserine. Basic and acidic residues-rich tracts occupy residues 445-461 and 477-492; these read KSSE…DIKS and PEQK…MANN. Residues 486-539 form the bHLH domain; it reads ERRMANNARERLRVRDINEAFKELGRMVQLHLKSDKPQTKLLILHQAVAVILSL.

In terms of assembly, efficient DNA binding requires dimerization with another bHLH protein. Forms homo- or heterooligomers with myogenin. Interacts with HIVEP2. Interacts with NEUROD2. Interacts with AGBL1.

The protein localises to the nucleus. Functionally, transcription factor that binds to the immunoglobulin enhancer Mu-E5/KE5-motif. Involved in the initiation of neuronal differentiation. Activates transcription by binding to the E box (5'-CANNTG-3'). Binds to the E-box present in the somatostatin receptor 2 initiator element (SSTR2-INR) to activate transcription. Interacts with the CCAAT displacement protein (CDP2) to bind the tyrosine hydroxylase enhancer. This is Transcription factor 4 (Tcf4) from Rattus norvegicus (Rat).